Consider the following 294-residue polypeptide: NAD kinase (294 aa).

D74 functions as the Proton acceptor in the catalytic mechanism. NAD(+) contacts are provided by residues 74 to 75 (DG), 148 to 149 (NE), H159, R176, D178, 189 to 194 (TAYSLS), and Q249.

Belongs to the NAD kinase family. It depends on a divalent metal cation as a cofactor.

The protein resides in the cytoplasm. It carries out the reaction NAD(+) + ATP = ADP + NADP(+) + H(+). Functionally, involved in the regulation of the intracellular balance of NAD and NADP, and is a key enzyme in the biosynthesis of NADP. Catalyzes specifically the phosphorylation on 2'-hydroxyl of the adenosine moiety of NAD to yield NADP. This Vibrio vulnificus (strain CMCP6) protein is NAD kinase.